A 564-amino-acid chain; its full sequence is Septation ring formation regulator EzrA (564 aa).

The Extracellular segment spans residues 1-4 (MVLY). Residues 5 to 23 (IILAIIVIILIAVGVLFYL) traverse the membrane as a helical segment. The Cytoplasmic portion of the chain corresponds to 24-564 (RSNKRQIIEK…KHIEEEVIKQ (541 aa)). Coiled coils occupy residues 99-138 (SFNA…YKDN), 190-223 (DGNY…LIRE), 271-300 (LISR…LIEH), 350-435 (VRQF…RRLL), and 471-550 (VKQL…ESVE).

This sequence belongs to the EzrA family.

It is found in the cell membrane. In terms of biological role, negative regulator of FtsZ ring formation; modulates the frequency and position of FtsZ ring formation. Inhibits FtsZ ring formation at polar sites. Interacts either with FtsZ or with one of its binding partners to promote depolymerization. The sequence is that of Septation ring formation regulator EzrA from Staphylococcus aureus (strain JH1).